The sequence spans 563 residues: Arginine--tRNA ligase (563 aa).

The short motif at 120 to 130 (PNIAKPFHVGH) is the 'HIGH' region element.

The protein belongs to the class-I aminoacyl-tRNA synthetase family. Monomer.

It is found in the cytoplasm. The catalysed reaction is tRNA(Arg) + L-arginine + ATP = L-arginyl-tRNA(Arg) + AMP + diphosphate. This is Arginine--tRNA ligase from Clostridium beijerinckii (strain ATCC 51743 / NCIMB 8052) (Clostridium acetobutylicum).